Consider the following 417-residue polypeptide: UDP-N-acetylglucosamine 1-carboxyvinyltransferase (417 aa).

Residue 22 to 23 (KN) coordinates phosphoenolpyruvate. Arginine 91 is a UDP-N-acetyl-alpha-D-glucosamine binding site. The Proton donor role is filled by cysteine 115. Cysteine 115 bears the 2-(S-cysteinyl)pyruvic acid O-phosphothioketal mark. Residues 120–124 (RPVDL), aspartate 304, and isoleucine 326 each bind UDP-N-acetyl-alpha-D-glucosamine.

This sequence belongs to the EPSP synthase family. MurA subfamily.

Its subcellular location is the cytoplasm. The catalysed reaction is phosphoenolpyruvate + UDP-N-acetyl-alpha-D-glucosamine = UDP-N-acetyl-3-O-(1-carboxyvinyl)-alpha-D-glucosamine + phosphate. It functions in the pathway cell wall biogenesis; peptidoglycan biosynthesis. In terms of biological role, cell wall formation. Adds enolpyruvyl to UDP-N-acetylglucosamine. The chain is UDP-N-acetylglucosamine 1-carboxyvinyltransferase from Nitratidesulfovibrio vulgaris (strain DP4) (Desulfovibrio vulgaris).